The primary structure comprises 477 residues: Argininosuccinate synthase (477 aa).

Residues Ala17–Ser25 and Ala43 contribute to the ATP site. L-citrulline is bound at residue Tyr99. Gly129 and Thr131 together coordinate ATP. The L-aspartate site is built by Thr131, Asn135, and Asp136. Asn135 lines the L-citrulline pocket. Asp136 is a binding site for ATP. Arg139 and Ser192 together coordinate L-citrulline. Asp194 contributes to the ATP binding site. Positions 201, 203, and 280 each coordinate L-citrulline. Residues Asp450 to Asp477 form a disordered region. The segment covering Asp468–Asp477 has biased composition (low complexity).

This sequence belongs to the argininosuccinate synthase family. Type 2 subfamily. In terms of assembly, homotetramer.

The protein localises to the cytoplasm. The enzyme catalyses L-citrulline + L-aspartate + ATP = 2-(N(omega)-L-arginino)succinate + AMP + diphosphate + H(+). It functions in the pathway amino-acid biosynthesis; L-arginine biosynthesis; L-arginine from L-ornithine and carbamoyl phosphate: step 2/3. In Nocardioides sp. (strain ATCC BAA-499 / JS614), this protein is Argininosuccinate synthase.